The following is a 224-amino-acid chain: Lipoprotein-releasing system ATP-binding protein LolD (224 aa).

The 220-residue stretch at 5–224 (LRAENIKKVI…GKVVGEITRV (220 aa)) folds into the ABC transporter domain. 37–44 (GASGSGKS) serves as a coordination point for ATP.

This sequence belongs to the ABC transporter superfamily. Lipoprotein translocase (TC 3.A.1.125) family. The complex is composed of two ATP-binding proteins (LolD) and two transmembrane proteins (LolC and LolE).

It localises to the cell inner membrane. In terms of biological role, part of the ABC transporter complex LolCDE involved in the translocation of mature outer membrane-directed lipoproteins, from the inner membrane to the periplasmic chaperone, LolA. Responsible for the formation of the LolA-lipoprotein complex in an ATP-dependent manner. The polypeptide is Lipoprotein-releasing system ATP-binding protein LolD (Aquifex aeolicus (strain VF5)).